Consider the following 581-residue polypeptide: Arginine--tRNA ligase (581 aa).

Positions 131 to 141 (ANPTGPMHVGH) match the 'HIGH' region motif.

This sequence belongs to the class-I aminoacyl-tRNA synthetase family. As to quaternary structure, monomer.

Its subcellular location is the cytoplasm. It catalyses the reaction tRNA(Arg) + L-arginine + ATP = L-arginyl-tRNA(Arg) + AMP + diphosphate. The sequence is that of Arginine--tRNA ligase from Paracoccus denitrificans (strain Pd 1222).